The primary structure comprises 513 residues: V-type proton ATPase subunit B, kidney isoform (513 aa).

ATP is bound at residue arginine 394. The PDZ-binding signature appears at 510-513; the sequence is DTAL.

This sequence belongs to the ATPase alpha/beta chains family. As to quaternary structure, V-ATPase is a heteromultimeric enzyme made up of two complexes: the ATP-hydrolytic V1 complex and the proton translocation V0 complex. The V1 complex consists of three catalytic AB heterodimers that form a heterohexamer, three peripheral stalks each consisting of EG heterodimers, one central rotor including subunits D and F, and the regulatory subunits C and H. The proton translocation complex V0 consists of the proton transport subunit a, a ring of proteolipid subunits c9c'', rotary subunit d, subunits e and f, and the accessory subunits ATP6AP1/Ac45 and ATP6AP2/PRR. Forms a complex with NHERF1 and SCL4A7. Kidney; localizes to early distal nephron, encompassing thick ascending limbs and distal convoluted tubules (at protein level). Expressed in the cochlea and endolymphatic sac.

The protein localises to the apical cell membrane. The protein resides in the basolateral cell membrane. Its function is as follows. Non-catalytic subunit of the V1 complex of vacuolar(H+)-ATPase (V-ATPase), a multisubunit enzyme composed of a peripheral complex (V1) that hydrolyzes ATP and a membrane integral complex (V0) that translocates protons. V-ATPase is responsible for acidifying and maintaining the pH of intracellular compartments and in some cell types, is targeted to the plasma membrane, where it is responsible for acidifying the extracellular environment. Essential for the proper assembly and activity of V-ATPase. In renal intercalated cells, mediates secretion of protons (H+) into the urine thereby ensuring correct urinary acidification. Required for optimal olfactory function by mediating the acidification of the nasal olfactory epithelium. This chain is V-type proton ATPase subunit B, kidney isoform (ATP6V1B1), found in Homo sapiens (Human).